The sequence spans 265 residues: RNA-binding protein 7 (265 aa).

Gly2 is modified (N-acetylglycine). One can recognise an RRM domain in the interval 10 to 87 (RTLFVGNLET…RPIKIQFRSG (78 aa)). ZCCHC8 binding regions lie at residues 25-35 (LLFELFHQAGP) and 59-76 (HEVSVPYAMNLLNGIKLF). The interval 91 to 125 (ASQDASVSYPQHHVGNLSPTSTSPNSYERTVGNVS) is disordered. Residues 107–125 (LSPTSTSPNSYERTVGNVS) show a composition bias toward polar residues. The residue at position 136 (Ser136) is a Phosphoserine; by MAPKAPK2. Position 137 is a phosphoserine (Ser137). Arg152 bears the Omega-N-methylarginine mark. Disordered regions lie at residues 166-224 (DQLG…HGSD) and 237-265 (DDRNHDGWSHDYDNRRDSSRGGKWPSSRH). Polar residues predominate over residues 170–196 (FSPSAQPHGHTFNQSSSSQWRQDALSS). At Ser203 the chain carries Phosphoserine. Basic and acidic residues-rich tracts occupy residues 207–224 (LADRHYSREQRYSDHGSD) and 237–256 (DDRNHDGWSHDYDNRRDSSR).

Component of the nuclear exosome targeting (NEXT) complex composed of MTREX, ZCCHC8, and RBM7 that directs a subset of non-coding short-lived RNAs for exosomal degradation. Interacts with ZCCHC8 and SF3B2/SAP145. Binds to MTREX through ZCCHC8. Interacts with YWHAE and YWHAZ; these interactions are stress-dependent and RBM7 phosphorylation dependent; release RNA from the NEXT complex and may affect RNA targeting to the nuclear RNA exosomome for degradation. Interacts with MEPCE and LARP7, the core subunits of 7SK snRNP; upon genotoxic stress this interaction is enhanced, triggering the release of inactive P-TEFb complex from the core and P-TEFb complex activation. Phosphorylated at Ser-136 by MAPK14/p38-alpha-activated MAPKAPK2/MK2; this phosphorylation is stress-dependent; this phosphorylation decreases its RNA-binding capacity therefore affecting RNA nuclear exosome-mediated degradation. This phosphorylation mediates YWHAE and YWHAZ interactions.

Its subcellular location is the nucleus. The protein resides in the nucleoplasm. In terms of biological role, RNA-binding subunit of the trimeric nuclear exosome targeting (NEXT) complex, a complex that functions as an RNA exosome cofactor that directs a subset of non-coding short-lived RNAs for exosomal degradation. NEXT is involved in surveillance and turnover of aberrant transcripts and non-coding RNAs. Binds preferentially polyuridine sequences and associates with newly synthesized RNAs, including pre-mRNAs and short-lived exosome substrates such as promoter upstream transcripts (PROMPTs), enhancer RNAs (eRNAs), and 3'-extended products from small nuclear RNAs (snRNAs). Participates in several biological processes including DNA damage response (DDR) and stress response. During stress response, activation of the p38MAPK-MK2 pathway decreases RBM7-RNA-binding and subsequently the RNA exosome degradation activities, thereby modulating the turnover of non-coding transcriptome. Participates in DNA damage response (DDR), through its interaction with MEPCE and LARP7, the core subunits of 7SK snRNP complex, that release the positive transcription elongation factor b (P-TEFb) complex from the 7SK snRNP. In turn, activation of P-TEFb complex induces the transcription of P-TEFb-dependent DDR genes to promote cell viability. In Mus musculus (Mouse), this protein is RNA-binding protein 7.